The sequence spans 339 residues: Ketol-acid reductoisomerase (NADP(+)) (339 aa).

Residues 1 to 182 form the KARI N-terminal Rossmann domain; sequence MRVYYDRDAD…GGGRSGIIET (182 aa). NADP(+) contacts are provided by residues 24–27, lysine 48, serine 51, threonine 53, and 83–86; these read YGSQ and DELQ. Residue histidine 108 is part of the active site. Glycine 134 serves as a coordination point for NADP(+). Positions 183–328 constitute a KARI C-terminal knotted domain; sequence NFREECETDL…AKLRGMMPWI (146 aa). 4 residues coordinate Mg(2+): aspartate 191, glutamate 195, glutamate 227, and glutamate 231. Position 252 (serine 252) interacts with substrate.

This sequence belongs to the ketol-acid reductoisomerase family. It depends on Mg(2+) as a cofactor.

It carries out the reaction (2R)-2,3-dihydroxy-3-methylbutanoate + NADP(+) = (2S)-2-acetolactate + NADPH + H(+). The catalysed reaction is (2R,3R)-2,3-dihydroxy-3-methylpentanoate + NADP(+) = (S)-2-ethyl-2-hydroxy-3-oxobutanoate + NADPH + H(+). It participates in amino-acid biosynthesis; L-isoleucine biosynthesis; L-isoleucine from 2-oxobutanoate: step 2/4. The protein operates within amino-acid biosynthesis; L-valine biosynthesis; L-valine from pyruvate: step 2/4. Functionally, involved in the biosynthesis of branched-chain amino acids (BCAA). Catalyzes an alkyl-migration followed by a ketol-acid reduction of (S)-2-acetolactate (S2AL) to yield (R)-2,3-dihydroxy-isovalerate. In the isomerase reaction, S2AL is rearranged via a Mg-dependent methyl migration to produce 3-hydroxy-3-methyl-2-ketobutyrate (HMKB). In the reductase reaction, this 2-ketoacid undergoes a metal-dependent reduction by NADPH to yield (R)-2,3-dihydroxy-isovalerate. The sequence is that of Ketol-acid reductoisomerase (NADP(+)) from Rhizobium rhizogenes (strain K84 / ATCC BAA-868) (Agrobacterium radiobacter).